The chain runs to 302 residues: Meiotically up-regulated gene 129 protein (302 aa).

Has a role in meiosis. This Schizosaccharomyces pombe (strain 972 / ATCC 24843) (Fission yeast) protein is Meiotically up-regulated gene 129 protein (mug129).